Consider the following 699-residue polypeptide: MPDLLLELRSEEIPARMQRRAAEDLKKLVTDALVARGFLYEGARAFSTPRRLALHIAGLPARGEAVREERRGPRVGAPEAAVQGFLKGAGLASLDQATTVTDPKKGEFYLAVIERPGRETLDVLAEFLPEIVRSFPWPKSMRWGAASAEPGSLRWVRPLQSIVATFGPETETPEVIPVSVGGIAAGTVTYGHRFLAPEAIEVRRFDDYIQALERAKVVLDADRRKDVILHDARDLAFARGLDLVEDEGLLEEVSGLVEWPVVLMGSFDESFLDIPAEAIRATIRANQKCFVLRKGGSEDLAPAFILVSNLVATDGGQAITAGNERVVRARLSDAKFFWETDKATRLEDRLPKLDAIVFHEKLGTQGERIARIAALAKDLAPRVGADPALAERAARLAKADLVTEMVGEFPELQGLMGRKYAALQGEHDSVCAAIEEHYKPLGPSDRVPTDPVSIAVALADKLDTLAGFWAIDEKPTGSKDPFALRRAALGVIRLILDRGLRLRLLEQVGAADRSLAGRAGADARDLLGFFADRLKVYLRDQGARHDLIDAVFALPGQDDLLMVVRRVEALAAFLDTEDGKNLLAGYKRAANILRIEEKKDGRAYDAAPDAALAAAGEPAERALAEALAKARETASAAVAREDFSGAMQALSTLRAPVDAFFQDVTVNAPDPKLRENRLALLNALRAATREVAEFAKIEG.

It belongs to the class-II aminoacyl-tRNA synthetase family. As to quaternary structure, tetramer of two alpha and two beta subunits.

The protein localises to the cytoplasm. The catalysed reaction is tRNA(Gly) + glycine + ATP = glycyl-tRNA(Gly) + AMP + diphosphate. The protein is Glycine--tRNA ligase beta subunit of Methylobacterium radiotolerans (strain ATCC 27329 / DSM 1819 / JCM 2831 / NBRC 15690 / NCIMB 10815 / 0-1).